We begin with the raw amino-acid sequence, 507 residues long: ATP synthase subunit alpha (507 aa).

ATP is bound at residue 170–177 (GDRKTGKT).

This sequence belongs to the ATPase alpha/beta chains family. As to quaternary structure, F-type ATPases have 2 components, CF(1) - the catalytic core - and CF(0) - the membrane proton channel. CF(1) has five subunits: alpha(3), beta(3), gamma(1), delta(1), epsilon(1). CF(0) has three main subunits: a(1), b(2) and c(9-12). The alpha and beta chains form an alternating ring which encloses part of the gamma chain. CF(1) is attached to CF(0) by a central stalk formed by the gamma and epsilon chains, while a peripheral stalk is formed by the delta and b chains.

It localises to the cell inner membrane. It catalyses the reaction ATP + H2O + 4 H(+)(in) = ADP + phosphate + 5 H(+)(out). In terms of biological role, produces ATP from ADP in the presence of a proton gradient across the membrane. The alpha chain is a regulatory subunit. The polypeptide is ATP synthase subunit alpha (Anaplasma marginale (strain Florida)).